The chain runs to 180 residues: Small ribosomal subunit protein uS5 (180 aa).

The 64-residue stretch at 24–87 (MIEKLVAVNR…EQARKNLATV (64 aa)) folds into the S5 DRBM domain.

The protein belongs to the universal ribosomal protein uS5 family. In terms of assembly, part of the 30S ribosomal subunit. Contacts proteins S4 and S8.

Functionally, with S4 and S12 plays an important role in translational accuracy. Located at the back of the 30S subunit body where it stabilizes the conformation of the head with respect to the body. In Xanthomonas axonopodis pv. citri (strain 306), this protein is Small ribosomal subunit protein uS5.